Consider the following 305-residue polypeptide: MSRSFYVDSLIIKDSSRPAPSLPESHPGPDFFIPLGMPSPLVMSVSGPGCPSRKSGAFCVCPLCVTSHLHSSRPPAGAGGGATGTAGAAVAGGGVAGGTGALPLLKSQFSPAPGDAQFCPRVSHAHHHHHPPQHHHHHHQPQQPGSAAAAAAAAAAAAAAAAALGHPQHHAPVCAATTYNMSDPRRFHCLSMGGSDTSQVPNGKRMRTAFTSTQLLELEREFSSNMYLSRLRRIEIATYLNLSEKQVKIWFQNRRVKHKKEGKGASRNNHTSCKCVGSQAHYARSEDEDSLSPASANEDKEISPL.

Disordered stretches follow at residues 115–151 (DAQFCPRVSHAHHHHHPPQHHHHHHQPQQPGSAAAAA) and 259–305 (KKEG…ISPL). A compositionally biased stretch (basic residues) spans 123–140 (SHAHHHHHPPQHHHHHHQ). The segment covering 141–151 (PQQPGSAAAAA) has biased composition (low complexity). The segment at residues 203 to 262 (GKRMRTAFTSTQLLELEREFSSNMYLSRLRRIEIATYLNLSEKQVKIWFQNRRVKHKKEG) is a DNA-binding region (homeobox).

This sequence belongs to the Antp homeobox family.

The protein localises to the nucleus. Functionally, transcription factor that binds 5'-CNAATTAG-3' DNA sequence and regulates the expression of numerous genes including genes important for brain development. During telencephalic development, causes ventralization of pallial progenitors and, depending on the developmental stage, specifies different neuronal fates. At early stages, necessary and sufficient to correctly specify the ventral lateral ganglionic eminence (LGE) and its major derivatives, the striatal projection neurons. At later stages, may specify LGE progenitors toward dorsal LGE fates, including olfactory bulb interneurons. The polypeptide is GS homeobox 2 (Gsx2) (Mus musculus (Mouse)).